The primary structure comprises 523 residues: Sensory neuron membrane protein 1 (523 aa).

Topologically, residues 1-10 (MRLARGIKYA) are cytoplasmic. Residues 11-31 (VIGAGVALFGVLFGWVMFPAI) traverse the membrane as a helical segment. Over 32 to 458 (LKSQLKKEMA…NQLFIPKRIV (427 aa)) the chain is Extracellular. 2 N-linked (GlcNAc...) asparagine glycosylation sites follow: N67 and N229. 3 disulfide bridges follow: C268–C333, C297–C352, and C335–C341. N440 is a glycosylation site (N-linked (GlcNAc...) asparagine). The helical transmembrane segment at 459 to 479 (SVIRWWLLSFGMLAALGGVIF) threads the bilayer. Topologically, residues 480–523 (HFKDDIMRIAIKGDSSVTKVNPEDGEQKDVSVIGQSHEPPKINM) are cytoplasmic. The disordered stretch occupies residues 499-523 (VNPEDGEQKDVSVIGQSHEPPKINM).

It belongs to the CD36 family. As to expression, localizes to both male and female antennae but not the leg, wing, gut, head, or thoracic ganglia. Detected throughout the sensory epithelium, associating with both sex-pheromone sensilla and plant-volatile sensilla. Differentially expressed both among different sensilla and different neurons within a given sensillum. Expression coincides with that of several other olfactory-specific proteins that are involved in odor detection.

The protein localises to the cell membrane. Its function is as follows. Plays an olfactory role that is not restricted to pheromone sensitivity. The chain is Sensory neuron membrane protein 1 from Manduca sexta (Tobacco hawkmoth).